The chain runs to 95 residues: MSSGGLLLLLGLLTLWAELTPVSSQDRPKFCYLPADPAECNAYMPRFYYDSASNKCKEFIYGGCRGNANNFKNRAECRHTCVASRKGIQPRIASN.

An N-terminal signal peptide occupies residues 1-24 (MSSGGLLLLLGLLTLWAELTPVSS). Pyrrolidone carboxylic acid is present on Gln25. Residues 31 to 81 (CYLPADPAECNAYMPRFYYDSASNKCKEFIYGGCRGNANNFKNRAECRHTC) enclose the BPTI/Kunitz inhibitor domain. 3 cysteine pairs are disulfide-bonded: Cys31–Cys81, Cys40–Cys64, and Cys56–Cys77. The tract at residues 65–67 (RGN) is responsible for the anti-cancer effect. Residues 92-95 (IASN) constitute a propeptide that is removed on maturation.

It belongs to the venom Kunitz-type family. As to quaternary structure, monomer. As to expression, expressed by the venom gland.

It is found in the secreted. Functionally, serine protease inhibitor that inhibits trypsin. Exhibits an anti-tumor effect and displays integrin inhibitory activity without being cytotoxic. Is able to dose-dependently inhibit the adhesion, migration and invasion of human glioblastoma U87 cells. Also impairs the function of alpha-v/beta-3 (ITGAV/ITGB3) and to a lesser extent, the activity of alpha-v/beta-6 (ITGAV/ITGB6), alpha-v/beta-5 (ITGAV/ITGB5), alpha-1/beta-1 (ITGA1/ITGB1) and alpha-5/beta-1 (ITGA5/ITGB1) integrins. This is Kunitz-type serine protease inhibitor PIVL from Macrovipera lebetina transmediterranea (Blunt-nosed viper).